We begin with the raw amino-acid sequence, 68 residues long: Pleurocidin (68 aa).

Positions 1–22 are cleaved as a signal peptide; the sequence is MKFTATFLMIAIFVLMVEPGEC. Residues 48–68 constitute a propeptide that is removed on maturation; that stretch reads GDKQELNKRAVDEDPNVIVFE.

It belongs to the pleurocidin family. In terms of tissue distribution, goblet cells.

The protein resides in the secreted. Antimicrobial peptide with potent activity against Gram-positive and Gram-negative bacteria. Activity against E.coli and B.subtilis. Weaker activity against L.mucor, s.marcescens and P.aeruginosa. May play a role in innate host defense. The sequence is that of Pleurocidin (ple2) from Pseudopleuronectes americanus (Winter flounder).